The chain runs to 400 residues: Acetate kinase (400 aa).

A Mg(2+)-binding site is contributed by Asn-10. Residue Lys-17 participates in ATP binding. Arg-91 contacts substrate. Asp-150 functions as the Proton donor/acceptor in the catalytic mechanism. ATP is bound by residues 210 to 214 (HLGNG), 285 to 287 (DCR), and 333 to 337 (GIGEN). Glu-387 is a binding site for Mg(2+).

This sequence belongs to the acetokinase family. Homodimer. The cofactor is Mg(2+). Requires Mn(2+) as cofactor.

The protein resides in the cytoplasm. The catalysed reaction is acetate + ATP = acetyl phosphate + ADP. The protein operates within metabolic intermediate biosynthesis; acetyl-CoA biosynthesis; acetyl-CoA from acetate: step 1/2. Catalyzes the formation of acetyl phosphate from acetate and ATP. Can also catalyze the reverse reaction. The chain is Acetate kinase from Serratia proteamaculans (strain 568).